Consider the following 210-residue polypeptide: MRHRRKGRVLGRSPAHRKALMRNLSSALFLTERDASLDENAPKVPGRIITTLEKAKEVRPLVEKCITLAKRALPALEEAKKYETSAERGSDEYKKWRKSEQWTQWADARAPYVNAQRRVLQLIGDREAVAVLFDTIAERFTDRPGGYTRIMRLAKPRLGDGGTRAILELVGKNDRVTRSAQRPAFEQDAPESDSAPEAEAKTEEETASAN.

Positions 177 to 210 (TRSAQRPAFEQDAPESDSAPEAEAKTEEETASAN) are disordered.

It belongs to the bacterial ribosomal protein bL17 family. In terms of assembly, part of the 50S ribosomal subunit. Contacts protein L32.

This is Large ribosomal subunit protein bL17 from Rhodopirellula baltica (strain DSM 10527 / NCIMB 13988 / SH1).